The sequence spans 340 residues: Lysophospholipase L2 (340 aa).

It is found in the cell inner membrane. It catalyses the reaction a 1-acyl-sn-glycero-3-phosphocholine + H2O = sn-glycerol 3-phosphocholine + a fatty acid + H(+). The chain is Lysophospholipase L2 (pldB) from Escherichia coli O6:H1 (strain CFT073 / ATCC 700928 / UPEC).